The primary structure comprises 356 residues: tRNA N6-adenosine threonylcarbamoyltransferase (356 aa).

The Fe cation site is built by His115 and His119. Residues 138 to 142 (LVSGG), Asp171, Gly184, and Asn283 each bind substrate. Asp311 is a Fe cation binding site.

Belongs to the KAE1 / TsaD family. Fe(2+) serves as cofactor.

It localises to the cytoplasm. The enzyme catalyses L-threonylcarbamoyladenylate + adenosine(37) in tRNA = N(6)-L-threonylcarbamoyladenosine(37) in tRNA + AMP + H(+). Its function is as follows. Required for the formation of a threonylcarbamoyl group on adenosine at position 37 (t(6)A37) in tRNAs that read codons beginning with adenine. Is involved in the transfer of the threonylcarbamoyl moiety of threonylcarbamoyl-AMP (TC-AMP) to the N6 group of A37, together with TsaE and TsaB. TsaD likely plays a direct catalytic role in this reaction. This chain is tRNA N6-adenosine threonylcarbamoyltransferase, found in Prochlorococcus marinus (strain MIT 9301).